A 546-amino-acid chain; its full sequence is Glucose-6-phosphate isomerase (546 aa).

The active-site Proton donor is Glu-353. Residues His-384 and Lys-512 contribute to the active site.

The protein belongs to the GPI family.

The protein resides in the cytoplasm. The enzyme catalyses alpha-D-glucose 6-phosphate = beta-D-fructose 6-phosphate. It participates in carbohydrate biosynthesis; gluconeogenesis. Its pathway is carbohydrate degradation; glycolysis; D-glyceraldehyde 3-phosphate and glycerone phosphate from D-glucose: step 2/4. Functionally, catalyzes the reversible isomerization of glucose-6-phosphate to fructose-6-phosphate. The sequence is that of Glucose-6-phosphate isomerase from Methylococcus capsulatus (strain ATCC 33009 / NCIMB 11132 / Bath).